A 214-amino-acid polypeptide reads, in one-letter code: ATP phosphoribosyltransferase (214 aa).

Belongs to the ATP phosphoribosyltransferase family. Short subfamily. As to quaternary structure, heteromultimer composed of HisG and HisZ subunits.

Its subcellular location is the cytoplasm. It carries out the reaction 1-(5-phospho-beta-D-ribosyl)-ATP + diphosphate = 5-phospho-alpha-D-ribose 1-diphosphate + ATP. It participates in amino-acid biosynthesis; L-histidine biosynthesis; L-histidine from 5-phospho-alpha-D-ribose 1-diphosphate: step 1/9. Catalyzes the condensation of ATP and 5-phosphoribose 1-diphosphate to form N'-(5'-phosphoribosyl)-ATP (PR-ATP). Has a crucial role in the pathway because the rate of histidine biosynthesis seems to be controlled primarily by regulation of HisG enzymatic activity. The sequence is that of ATP phosphoribosyltransferase from Methylibium petroleiphilum (strain ATCC BAA-1232 / LMG 22953 / PM1).